A 474-amino-acid chain; its full sequence is 3-isopropylmalate dehydratase large subunit (474 aa).

Residues C355, C415, and C418 each coordinate [4Fe-4S] cluster.

It belongs to the aconitase/IPM isomerase family. LeuC type 1 subfamily. As to quaternary structure, heterodimer of LeuC and LeuD. It depends on [4Fe-4S] cluster as a cofactor.

The enzyme catalyses (2R,3S)-3-isopropylmalate = (2S)-2-isopropylmalate. The protein operates within amino-acid biosynthesis; L-leucine biosynthesis; L-leucine from 3-methyl-2-oxobutanoate: step 2/4. Catalyzes the isomerization between 2-isopropylmalate and 3-isopropylmalate, via the formation of 2-isopropylmaleate. This chain is 3-isopropylmalate dehydratase large subunit, found in Shewanella sp. (strain W3-18-1).